We begin with the raw amino-acid sequence, 151 residues long: Large ribosomal subunit protein uL13 (151 aa).

The protein belongs to the universal ribosomal protein uL13 family. As to quaternary structure, part of the 50S ribosomal subunit.

This protein is one of the early assembly proteins of the 50S ribosomal subunit, although it is not seen to bind rRNA by itself. It is important during the early stages of 50S assembly. This is Large ribosomal subunit protein uL13 from Synechococcus sp. (strain JA-3-3Ab) (Cyanobacteria bacterium Yellowstone A-Prime).